A 61-amino-acid polypeptide reads, in one-letter code: Short neurotoxin 2 (61 aa).

Cystine bridges form between Cys-3–Cys-23, Cys-17–Cys-40, Cys-42–Cys-53, and Cys-54–Cys-59.

Belongs to the three-finger toxin family. Short-chain subfamily. Type I alpha-neurotoxin sub-subfamily. In terms of tissue distribution, expressed by the venom gland.

It localises to the secreted. In terms of biological role, binds to muscle nicotinic acetylcholine receptor (nAChR) and inhibit acetylcholine from binding to the receptor, thereby impairing neuromuscular transmission. The polypeptide is Short neurotoxin 2 (Naja nivea (Cape cobra)).